The sequence spans 820 residues: Disintegrin and metalloproteinase domain-containing protein 29 (820 aa).

Positions 1–18 are cleaved as a signal peptide; that stretch reads MKMLLLLHCLGVFLSCSG. Residues 19 to 193 constitute a propeptide that is removed on maturation; sequence HIQDEHPQYH…TQKQSSYVGW (175 aa). Residues 194 to 674 are Extracellular-facing; it reads WIHFRIVEIV…GPPPKRKKKK (481 aa). A Peptidase M12B domain is found at 198-390; that stretch reads RIVEIVVVID…RTKCLLETVH (193 aa). Residues asparagine 217 and asparagine 320 are each glycosylated (N-linked (GlcNAc...) asparagine). Cystine bridges form between cysteine 307–cysteine 384, cysteine 347–cysteine 369, and cysteine 349–cysteine 354. Asparagine 368, asparagine 428, asparagine 469, asparagine 538, asparagine 545, asparagine 558, and asparagine 564 each carry an N-linked (GlcNAc...) asparagine glycan. One can recognise a Disintegrin domain in the interval 397–483; the sequence is VKRCGNGVVE…KCPDDFYVED (87 aa). An intrachain disulfide couples cysteine 455 to cysteine 475. 3 cysteine pairs are disulfide-bonded: cysteine 625/cysteine 636, cysteine 630/cysteine 642, and cysteine 644/cysteine 653. The EGF-like domain maps to 625 to 654; that stretch reads CSPAFCNKRGICNNKHHCHCNYLWDPPNCL. The helical transmembrane segment at 675–695 threads the bilayer; the sequence is KFCYLCILLLIVLFILLCCLY. The Cytoplasmic segment spans residues 696 to 820; sequence RLCKKSKPIK…SQSQPPVTPS (125 aa). The segment at 706–820 is disordered; sequence KQQDVQTPSA…SQSQPPVTPS (115 aa). The span at 715-727 shows a compositional bias: basic and acidic residues; sequence AKEEEKIQRRPHE. The span at 738–820 shows a compositional bias: low complexity; it reads PSQSQPPVTP…SQSQPPVTPS (83 aa). 9 consecutive repeat copies span residues 739–747, 748–756, 757–765, 766–774, 775–783, 784–792, 793–801, 802–810, and 811–819. Positions 739-819 are 9 X 9 AA approximate repeats; sequence SQSQPPVTPS…PSQSQPPVTP (81 aa).

As to expression, expressed specifically in testes.

The protein localises to the membrane. May be involved in spermatogenesis and fertilization. Seems to be a non catalytic metalloprotease-like protein. The chain is Disintegrin and metalloproteinase domain-containing protein 29 (ADAM29) from Homo sapiens (Human).